The following is a 196-amino-acid chain: GTP cyclohydrolase-2 (196 aa).

49 to 53 (RVHSE) lines the GTP pocket. Residues Cys-54, Cys-65, and Cys-67 each contribute to the Zn(2+) site. GTP-binding positions include Gln-70, 92 to 94 (EGR), and Thr-114. The active-site Proton acceptor is Asp-126. The active-site Nucleophile is the Arg-128. Positions 149 and 154 each coordinate GTP.

It belongs to the GTP cyclohydrolase II family. As to quaternary structure, homodimer. Zn(2+) is required as a cofactor.

The enzyme catalyses GTP + 4 H2O = 2,5-diamino-6-hydroxy-4-(5-phosphoribosylamino)-pyrimidine + formate + 2 phosphate + 3 H(+). Its pathway is cofactor biosynthesis; riboflavin biosynthesis; 5-amino-6-(D-ribitylamino)uracil from GTP: step 1/4. In terms of biological role, catalyzes the conversion of GTP to 2,5-diamino-6-ribosylamino-4(3H)-pyrimidinone 5'-phosphate (DARP), formate and pyrophosphate. The polypeptide is GTP cyclohydrolase-2 (Escherichia coli O127:H6 (strain E2348/69 / EPEC)).